The chain runs to 153 residues: MNFEGKLVGKDLKIAIVVSRFNDFITTRLLEGAKDTLIRHEVEDTNIDVAYVPGAFEIPLVAKKLAQKGEYDAVITLGCVIRGATSHYDYVCNEVAKGVSKANDISDTPVIFGVLTTESIEQAVERAGTKAGNKGSEAAVSAIEMANLIKQIN.

5-amino-6-(D-ribitylamino)uracil-binding positions include Phe21, 55–57 (AFE), and 79–81 (CVI). A (2S)-2-hydroxy-3-oxobutyl phosphate-binding site is contributed by 84–85 (AT). The active-site Proton donor is the His87. A 5-amino-6-(D-ribitylamino)uracil-binding site is contributed by Phe112. Residue Arg126 participates in (2S)-2-hydroxy-3-oxobutyl phosphate binding.

The protein belongs to the DMRL synthase family. Forms an icosahedral capsid composed of 60 subunits, arranged as a dodecamer of pentamers.

It carries out the reaction (2S)-2-hydroxy-3-oxobutyl phosphate + 5-amino-6-(D-ribitylamino)uracil = 6,7-dimethyl-8-(1-D-ribityl)lumazine + phosphate + 2 H2O + H(+). It participates in cofactor biosynthesis; riboflavin biosynthesis; riboflavin from 2-hydroxy-3-oxobutyl phosphate and 5-amino-6-(D-ribitylamino)uracil: step 1/2. Functionally, catalyzes the formation of 6,7-dimethyl-8-ribityllumazine by condensation of 5-amino-6-(D-ribitylamino)uracil with 3,4-dihydroxy-2-butanone 4-phosphate. This is the penultimate step in the biosynthesis of riboflavin. The chain is 6,7-dimethyl-8-ribityllumazine synthase from Staphylococcus epidermidis (strain ATCC 35984 / DSM 28319 / BCRC 17069 / CCUG 31568 / BM 3577 / RP62A).